Here is a 299-residue protein sequence, read N- to C-terminus: Oxygen-dependent coproporphyrinogen-III oxidase (299 aa).

Serine 92 lines the substrate pocket. 2 residues coordinate a divalent metal cation: histidine 96 and histidine 106. Histidine 106 serves as the catalytic Proton donor. Substrate is bound at residue 108-110; the sequence is NVR. A divalent metal cation is bound by residues histidine 145 and histidine 175. Residues 240–275 form an important for dimerization region; it reads YVEFNLVWDRGTLFGLQTGGRTESILMSMPPLVRWE. A substrate-binding site is contributed by 258 to 260; the sequence is GGR.

Belongs to the aerobic coproporphyrinogen-III oxidase family. Homodimer. A divalent metal cation is required as a cofactor.

The protein localises to the cytoplasm. It carries out the reaction coproporphyrinogen III + O2 + 2 H(+) = protoporphyrinogen IX + 2 CO2 + 2 H2O. The protein operates within porphyrin-containing compound metabolism; protoporphyrin-IX biosynthesis; protoporphyrinogen-IX from coproporphyrinogen-III (O2 route): step 1/1. Its function is as follows. Involved in the heme biosynthesis. Catalyzes the aerobic oxidative decarboxylation of propionate groups of rings A and B of coproporphyrinogen-III to yield the vinyl groups in protoporphyrinogen-IX. In Shigella boydii serotype 18 (strain CDC 3083-94 / BS512), this protein is Oxygen-dependent coproporphyrinogen-III oxidase.